The primary structure comprises 318 residues: Galactose-1-phosphate uridylyltransferase (318 aa).

Residues cysteine 32, cysteine 35, and histidine 90 each coordinate Zn(2+). Position 130 (asparagine 130) interacts with UDP-alpha-D-glucose. Histidine 141 lines the Zn(2+) pocket. Histidine 143 (tele-UMP-histidine intermediate) is an active-site residue. Glutamine 145 is a binding site for UDP-alpha-D-glucose.

Belongs to the galactose-1-phosphate uridylyltransferase type 1 family. It depends on Zn(2+) as a cofactor.

The catalysed reaction is alpha-D-galactose 1-phosphate + UDP-alpha-D-glucose = alpha-D-glucose 1-phosphate + UDP-alpha-D-galactose. It participates in carbohydrate metabolism; galactose metabolism. The polypeptide is Galactose-1-phosphate uridylyltransferase (galT) (Thermotoga maritima (strain ATCC 43589 / DSM 3109 / JCM 10099 / NBRC 100826 / MSB8)).